Consider the following 234-residue polypeptide: Proteasome subunit alpha type-2 (234 aa).

The protein belongs to the peptidase T1A family. The 26S proteasome consists of a 20S proteasome core and two 19S regulatory subunits. The 20S proteasome core is composed of 28 subunits that are arranged in four stacked rings, resulting in a barrel-shaped structure. The two end rings are each formed by seven alpha subunits, and the two central rings are each formed by seven beta subunits. The catalytic chamber with the active sites is on the inside of the barrel. Interacts with Rpn6.

The protein localises to the cytoplasm. The protein resides in the nucleus. In terms of biological role, the proteasome is a multicatalytic proteinase complex which is characterized by its ability to cleave peptides with Arg, Phe, Tyr, Leu, and Glu adjacent to the leaving group at neutral or slightly basic pH. The proteasome has an ATP-dependent proteolytic activity. The chain is Proteasome subunit alpha type-2 (Prosalpha2) from Drosophila melanogaster (Fruit fly).